Here is a 110-residue protein sequence, read N- to C-terminus: Large ribosomal subunit protein uL24 (110 aa).

The protein belongs to the universal ribosomal protein uL24 family. As to quaternary structure, part of the 50S ribosomal subunit.

Its function is as follows. One of two assembly initiator proteins, it binds directly to the 5'-end of the 23S rRNA, where it nucleates assembly of the 50S subunit. In terms of biological role, one of the proteins that surrounds the polypeptide exit tunnel on the outside of the subunit. In Chloroflexus aggregans (strain MD-66 / DSM 9485), this protein is Large ribosomal subunit protein uL24.